Here is a 229-residue protein sequence, read N- to C-terminus: Large ribosomal subunit protein uL1 (229 aa).

This sequence belongs to the universal ribosomal protein uL1 family. In terms of assembly, part of the 50S ribosomal subunit.

In terms of biological role, binds directly to 23S rRNA. The L1 stalk is quite mobile in the ribosome, and is involved in E site tRNA release. Its function is as follows. Protein L1 is also a translational repressor protein, it controls the translation of the L11 operon by binding to its mRNA. The chain is Large ribosomal subunit protein uL1 from Clostridium botulinum (strain Loch Maree / Type A3).